A 643-amino-acid chain; its full sequence is Phosphatidylinositol-3,5-bisphosphate 3-phosphatase MTMR2 (643 aa).

2 stretches are compositionally biased toward polar residues: residues 1 to 12 (MEKSSSCESLGS) and 23 to 40 (DSLSSASTSHSENSVHTK). A disordered region spans residues 1 to 56 (MEKSSSCESLGSQPAAARPPSVDSLSSASTSHSENSVHTKSASVVSSDSISTSADN). A phosphoserine mark is found at Ser-6 and Ser-9. Residues 41 to 55 (SASVVSSDSISTSAD) show a composition bias toward low complexity. At Ser-58 the chain carries Phosphoserine. A GRAM domain is found at 68-139 (NKLAEMEEPP…GVINRVEKIG (72 aa)). A Myotubularin phosphatase domain is found at 205–580 (GWKLYDPLLE…RHLELWVGYY (376 aa)). The a 1,2-diacyl-sn-glycero-3-phospho-(1D-myo-inositol-3,5-bisphosphate) site is built by Asn-330, Asn-355, and Ile-356. 3 residues coordinate a 1,2-diacyl-sn-glycero-3-phospho-(1D-myo-inositol-3-phosphate): Asn-330, Asn-355, and Ile-356. Cys-417 acts as the Phosphocysteine intermediate in catalysis. Ser-418, Asp-419, Gly-420, Trp-421, Asp-422, Arg-423, Arg-459, and Arg-463 together coordinate a 1,2-diacyl-sn-glycero-3-phospho-(1D-myo-inositol-3,5-bisphosphate). A 1,2-diacyl-sn-glycero-3-phospho-(1D-myo-inositol-3-phosphate) is bound by residues Ser-418, Asp-419, Gly-420, Trp-421, Asp-422, and Arg-423. Arg-463 provides a ligand contact to a 1,2-diacyl-sn-glycero-3-phospho-(1D-myo-inositol-3-phosphate). Residues 593-627 (IHNRYKELLAKRAELQKKVEELQREISNRSTSSSE) are a coiled coil. The segment at 615–643 (QREISNRSTSSSERASSPAQCVTPVQTVV) is disordered. Low complexity predominate over residues 620-631 (NRSTSSSERASS). Polar residues predominate over residues 632–643 (PAQCVTPVQTVV).

This sequence belongs to the protein-tyrosine phosphatase family. Non-receptor class myotubularin subfamily. In terms of assembly, homodimer (via coiled-coil domain). Heterotetramer consisting of one MTMR2 dimer and one SBF2/MTMR13 dimer; specifically in peripheral nerves stabilizes SBF2/MTMR13 at the membranes and increases MTMR2 catalytic activity towards phosphatidylinositol 3,5-bisphosphate and to a lesser extent towards phosphatidylinositol 3-phosphate. Heterodimer with SBF1/MTMR5; acts as an adapter for the phosphatase MTMR2 to regulate MTMR2 catalytic activity and subcellular location. Heterodimer with MTMR12. Phosphorylation at Ser-58 decreases MTMR2 localization to endocytic vesicular structures.

The protein localises to the cytoplasm. The protein resides in the early endosome membrane. Its subcellular location is the perinuclear region. It is found in the cell projection. It localises to the axon. The protein localises to the endosome membrane. The enzyme catalyses a 1,2-diacyl-sn-glycero-3-phospho-(1D-myo-inositol-3,5-bisphosphate) + H2O = a 1,2-diacyl-sn-glycero-3-phospho-(1D-myo-inositol-5-phosphate) + phosphate. It carries out the reaction a 1,2-diacyl-sn-glycero-3-phospho-(1D-myo-inositol-3-phosphate) + H2O = a 1,2-diacyl-sn-glycero-3-phospho-(1D-myo-inositol) + phosphate. The catalysed reaction is 1,2-dioctanoyl-sn-glycero-3-phospho-(1-D-myo-inositol-3-phosphate) + H2O = 1,2-dioctanoyl-sn-glycero-3-phospho-(1D-myo-inositol) + phosphate. It catalyses the reaction 1,2-dioctanoyl-sn-glycero-3-phospho-(1D-myo-inositol-3,5-bisphosphate) + H2O = 1,2-dioctanoyl-sn-glycero-3-phospho-(1D-myo-inositol-5-phosphate) + phosphate. Its function is as follows. Lipid phosphatase that specifically dephosphorylates the D-3 position of phosphatidylinositol 3-phosphate and phosphatidylinositol 3,5-bisphosphate, generating phosphatidylinositol and phosphatidylinositol 5-phosphate. Regulates the level of these phosphoinositides critical for various biological processes including autophagy initiation and autophagosome maturation. The polypeptide is Phosphatidylinositol-3,5-bisphosphate 3-phosphatase MTMR2 (Pongo abelii (Sumatran orangutan)).